Consider the following 327-residue polypeptide: Flotillin-like protein FloA (327 aa).

Residues 2 to 22 (IGLIIIVVIVLVALLLLFSFV) form a helical membrane-spanning segment. A disordered region spans residues 305-327 (ADTGMRNSINQRTNQKDDESPDK). Positions 318–327 (NQKDDESPDK) are enriched in basic and acidic residues.

The protein belongs to the flotillin-like FloA family. In terms of assembly, homooligomerizes.

It localises to the cell membrane. It is found in the membrane raft. Found in functional membrane microdomains (FMM) that may be equivalent to eukaryotic membrane rafts. FMMs are highly dynamic and increase in number as cells age. Flotillins are thought to be important factors in membrane fluidity. The polypeptide is Flotillin-like protein FloA (Staphylococcus saprophyticus subsp. saprophyticus (strain ATCC 15305 / DSM 20229 / NCIMB 8711 / NCTC 7292 / S-41)).